An 885-amino-acid chain; its full sequence is Insulin receptor substrate 1-A (885 aa).

The region spanning 1 to 56 (MNIRRCGHSENFFFIEVGRSAVTGAGEFWMQVDDSVVAQNMHETILEAMKALSDEF) is the IRS-type PTB domain. The disordered stretch occupies residues 56–225 (FRPRSKSQSS…GGFISSDEYG (170 aa)). Low complexity-rich tracts occupy residues 61 to 75 (KSQS…ISVP), 99 to 109 (SATATSPAGGA), 176 to 197 (SPSA…GSTS), and 205 to 217 (SSAS…SDGG). S104 carries the phosphoserine modification. Y257 is subject to Phosphotyrosine; by INSR. The YXXM motif 1 motif lies at 257-260 (YICM). Composition is skewed to polar residues over residues 263–276 (SSSH…QRYQ) and 296–313 (SSGT…PSQS). 2 disordered regions span residues 263-282 (SSSH…RGEE) and 293-313 (RTHS…PSQS). Short sequence motifs (YXXM motif) lie at residues 318–321 (YTEM), 364–367 (YMPM), 381–384 (YMPM), 409–412 (YMMM), and 451–454 (YINM). Phosphotyrosine; by INSR is present on residues Y364 and Y381. At Y409 the chain carries Phosphotyrosine. The interval 501–581 (NLRISANSGH…LPPEPKSPGE (81 aa)) is disordered. Residues 504–515 (ISANSGHNLYTE) show a composition bias toward polar residues. A compositionally biased stretch (low complexity) spans 516-526 (DSSSSSTSSDS). Y582 and Y620 each carry phosphotyrosine; by INSR. The segment at 582 to 584 (YVN) is GRB2-binding. A YXXM motif 7 motif is present at residues 620-623 (YMNM). Residues 637-660 (TSSYEPPNKPVNSVCPTETCSSSR) are compositionally biased toward polar residues. The segment at 637 to 665 (TSSYEPPNKPVNSVCPTETCSSSRPPIRG) is disordered. Y672 is subject to Phosphotyrosine; by INSR. 2 consecutive short sequence motifs (YXXM motif) follow at residues 672–675 (YMSM) and 706–709 (YAEM). The disordered stretch occupies residues 732-803 (ASRSSLLGQG…SGEDVKRHSS (72 aa)). Composition is skewed to polar residues over residues 743 to 758 (GPSA…NRNP) and 777 to 792 (ETFS…TTGP). Y834 and Y866 each carry phosphotyrosine; by INSR.

In terms of assembly, interacts with the NPXY motif of tyrosine-phosphorylated igf1r and insr via the PTB domain. Binds to phosphatidylinositol 3-kinase p85 subunit at a low level in vitro prior to phosphorylation. Binding is greatly enhanced following tyrosine phosphorylation by insr and probably occurs via the phosphorylated YXXM motifs. In terms of processing, phosphorylation of Tyr-582 is required for grb2-binding.

Its function is as follows. May mediate the control of various cellular processes by insulin. When phosphorylated by the insulin receptor binds specifically to various cellular proteins containing SH2 domains such as phosphatidylinositol 3-kinase p85 subunit or grb2. Activates phosphatidylinositol 3-kinase when bound to the regulatory p85 subunit. The protein is Insulin receptor substrate 1-A (irs1-a) of Xenopus laevis (African clawed frog).